The following is a 148-amino-acid chain: Large ribosomal subunit protein uL15 (148 aa).

The disordered stretch occupies residues 1–51; that stretch reads MNLSNLKPAEGSTKTRKRIGRGPGSGLGGTSTRGHKGAKSRSGYKNKIGFE. Positions 21 to 31 are enriched in gly residues; the sequence is RGPGSGLGGTS. Basic residues predominate over residues 33 to 44; sequence RGHKGAKSRSGY.

This sequence belongs to the universal ribosomal protein uL15 family. As to quaternary structure, part of the 50S ribosomal subunit.

In terms of biological role, binds to the 23S rRNA. The polypeptide is Large ribosomal subunit protein uL15 (Parabacteroides distasonis (strain ATCC 8503 / DSM 20701 / CIP 104284 / JCM 5825 / NCTC 11152)).